Consider the following 152-residue polypeptide: Transcriptional regulator MraZ (152 aa).

SpoVT-AbrB domains lie at 5–52 (ATLV…PLPE) and 81–124 (ASEC…DETT).

It belongs to the MraZ family. As to quaternary structure, forms oligomers.

It localises to the cytoplasm. Its subcellular location is the nucleoid. Negatively regulates its own expression and that of the subsequent genes in the proximal part of the division and cell wall (dcw) gene cluster. Acts by binding directly to DNA. May also regulate the expression of genes outside the dcw cluster. In Shigella flexneri serotype 5b (strain 8401), this protein is Transcriptional regulator MraZ.